A 1043-amino-acid polypeptide reads, in one-letter code: Isoleucine--tRNA ligase (1043 aa).

The 'HIGH' region motif lies at 49–59; the sequence is PFATGLPHYGH. A 'KMSKS' region motif is present at residues 592-596; sequence KMSKR. Lys-595 lines the ATP pocket.

This sequence belongs to the class-I aminoacyl-tRNA synthetase family. IleS type 2 subfamily. Monomer. Zn(2+) is required as a cofactor.

The protein localises to the cytoplasm. The enzyme catalyses tRNA(Ile) + L-isoleucine + ATP = L-isoleucyl-tRNA(Ile) + AMP + diphosphate. In terms of biological role, catalyzes the attachment of isoleucine to tRNA(Ile). As IleRS can inadvertently accommodate and process structurally similar amino acids such as valine, to avoid such errors it has two additional distinct tRNA(Ile)-dependent editing activities. One activity is designated as 'pretransfer' editing and involves the hydrolysis of activated Val-AMP. The other activity is designated 'posttransfer' editing and involves deacylation of mischarged Val-tRNA(Ile). The protein is Isoleucine--tRNA ligase of Chlamydia abortus (strain DSM 27085 / S26/3) (Chlamydophila abortus).